The sequence spans 395 residues: Elongation factor Tu (395 aa).

Positions 10–204 (KEHANIGTIG…AVDDYIPTPE (195 aa)) constitute a tr-type G domain. Residues 19–26 (GHVDHGKT) are G1. 19–26 (GHVDHGKT) lines the GTP pocket. Thr26 is a Mg(2+) binding site. Positions 60–64 (GITIN) are G2. The interval 81 to 84 (DCPG) is G3. GTP contacts are provided by residues 81-85 (DCPGH) and 136-139 (NKAD). The segment at 136–139 (NKAD) is G4. The segment at 174–176 (SAL) is G5.

It belongs to the TRAFAC class translation factor GTPase superfamily. Classic translation factor GTPase family. EF-Tu/EF-1A subfamily. In terms of assembly, monomer.

The protein resides in the cytoplasm. It catalyses the reaction GTP + H2O = GDP + phosphate + H(+). GTP hydrolase that promotes the GTP-dependent binding of aminoacyl-tRNA to the A-site of ribosomes during protein biosynthesis. The polypeptide is Elongation factor Tu (Staphylococcus carnosus (strain TM300)).